The sequence spans 35 residues: Jingzhaotoxin F6-27.63 (35 aa).

Disulfide bonds link Cys-2–Cys-17, Cys-9–Cys-22, and Cys-16–Cys-29.

The protein belongs to the neurotoxin 10 (Hwtx-1) family. 49 (Jztx-F6) subfamily. In terms of tissue distribution, expressed by the venom gland.

It is found in the secreted. Its function is as follows. Probable ion channel inhibitor. The chain is Jingzhaotoxin F6-27.63 from Chilobrachys guangxiensis (Chinese earth tiger tarantula).